The chain runs to 436 residues: Glucose-1-phosphate adenylyltransferase (436 aa).

Residues Tyr-112, Gly-178, 193–194, and Ser-211 each bind alpha-D-glucose 1-phosphate; that span reads EK.

It belongs to the bacterial/plant glucose-1-phosphate adenylyltransferase family. As to quaternary structure, homotetramer.

The enzyme catalyses alpha-D-glucose 1-phosphate + ATP + H(+) = ADP-alpha-D-glucose + diphosphate. The protein operates within glycan biosynthesis; glycogen biosynthesis. Involved in the biosynthesis of ADP-glucose, a building block required for the elongation reactions to produce glycogen. Catalyzes the reaction between ATP and alpha-D-glucose 1-phosphate (G1P) to produce pyrophosphate and ADP-Glc. The polypeptide is Glucose-1-phosphate adenylyltransferase (Histophilus somni (strain 129Pt) (Haemophilus somnus)).